A 45-amino-acid polypeptide reads, in one-letter code: Bomanin Short 2 (45 aa).

The signal sequence occupies residues 1–20; the sequence is MKFFSVVTVFVFGLLALANA. A propeptide spans 21–27 (removed by a dipeptidylpeptidase); the sequence is VPLSPDP. Residues cysteine 36 and cysteine 39 are joined by a disulfide bond. Glycine 43 is modified (glycine amide).

In terms of tissue distribution, hemolymph (at protein level).

The protein localises to the secreted. Its function is as follows. Secreted immune-induced peptide induced by Toll signaling. Has a role in resistance to bacterial and fungal infections. The polypeptide is Bomanin Short 2 (Drosophila melanogaster (Fruit fly)).